Consider the following 290-residue polypeptide: MRIADYSVTKAVLERHGFTFKKSFGQNFLTDTNILQKIVDTAEINKNVNVIEIGPGIGALTEFLAENASEVMAFEIDERLVPILEDTLRDHDNVKVINEDVLKADLQTRVKEFENPDLPIKVVANLPYYITTPILMHLIESKIPFSEFVVMMQKEVADRISAEPNTKAYGSLSIAVQYYMTAKVAFAVPRTVFVPAPNVDSAILKMTRRKQPLVEVKDEDFFFRVSKASFLHRRKTLWNNLTSHFGKSEEVKNKLDQALENAAIKPSIRGEALSISDFARLSDALREAGL.

S-adenosyl-L-methionine is bound by residues N27, L29, G54, E75, D100, and N125.

This sequence belongs to the class I-like SAM-binding methyltransferase superfamily. rRNA adenine N(6)-methyltransferase family. RsmA subfamily.

Its subcellular location is the cytoplasm. It catalyses the reaction adenosine(1518)/adenosine(1519) in 16S rRNA + 4 S-adenosyl-L-methionine = N(6)-dimethyladenosine(1518)/N(6)-dimethyladenosine(1519) in 16S rRNA + 4 S-adenosyl-L-homocysteine + 4 H(+). Its function is as follows. Specifically dimethylates two adjacent adenosines (A1518 and A1519) in the loop of a conserved hairpin near the 3'-end of 16S rRNA in the 30S particle. May play a critical role in biogenesis of 30S subunits. The chain is Ribosomal RNA small subunit methyltransferase A from Streptococcus thermophilus (strain CNRZ 1066).